The primary structure comprises 278 residues: HTH-type transcriptional activator RhaS (278 aa).

The 99-residue stretch at 174–272 (NLLLAWLEDH…NWSPRDIRQG (99 aa)) folds into the HTH araC/xylS-type domain. 2 DNA-binding regions (H-T-H motif) span residues 191 to 212 (DAVADQFSLSLRTLHRQLKQQT) and 239 to 262 (VTDIAYRCGFSDSNHFSTLFRREF).

In terms of assembly, binds DNA as a dimer.

The protein localises to the cytoplasm. Functionally, activates expression of the rhaBAD and rhaT operons. In Escherichia coli O81 (strain ED1a), this protein is HTH-type transcriptional activator RhaS.